We begin with the raw amino-acid sequence, 813 residues long: MIHNDTVADAKANPDLEQPYHELGLKDDEYARIKELLGRRPTDAELAMYSVMWSEHCSYKSSKTHLRYFGETTTEEMKSKMLAGIGENAGVIDIGDGHAVTFKVESHNHPSYVEPYQGAATGVGGIVRDIMAMGARPVAVMDQLRFGPADLPDTQRVLPGVVAGVGGYGNSLGLPNIGGETVFDATYAGNPLVNALCVGTLKTEDLKLAFASGKGNRVILFGSRTGLDGIGGVSVLASDTFEEGAERKLPAVQVGDPFAEKVLIECCLDLYRANVVVGIQDLGGAGLSCATAELASAGDGGMHINLDNVHLRAEGMTAAEILSSESQERMCAVVEPENVDAFMEICRKWDVLASDIGCVTDGEHLVIEHCGEIVVDASAHTMAEEGPVYERPYERPAEQDELNEPRGVELPETSQEVRQQILDLAASPALCSREFITEQYDRYVRGNTVAAKDADAGVLRIDEETGRGIAVSTDASGRYARLDPRTGAQLALAEAYRNVSVTGATPVAVSNCLNFGSPEDPGVMWQFREAVHGLADGCKEMGIPVTGGNVSFYNQTGDTAILPTPVIAVLGTIDDCARRIPQQLPKQAGAEAGADESQEQYHLVLVGAETREELGGSIWQQVVHDELAGLPPQVDLSVEQRLGAFITDQRDKIVAAHDLSEGGLSQAVVELAIQSGRGMAVNPMLSQHESAVAQGRTLAQQAAVGLFSETASRVLLAVRSEDYGDLMRDLAETGLTGGWIGLTGVSDAAGQPVIRFGSGVYPVLPFGGEIELDPAKQHDDDFDIVISLDEAETAWKSTLPALFSHAAGNNSVI.

The active site involves His56. ATP contacts are provided by Tyr59 and Lys103. Glu105 is a binding site for Mg(2+). Substrate contacts are provided by residues 106–109 (SHNH) and Arg128. The Proton acceptor role is filled by His107. Asp129 is a binding site for Mg(2+). Gln253 contacts substrate. Asp281 is a Mg(2+) binding site. Position 325-327 (325-327 (ESQ)) interacts with substrate. Residues Asn511 and Gly548 each coordinate ATP. Asn549 is a Mg(2+) binding site. Ser551 contacts substrate.

This sequence belongs to the FGAMS family. As to quaternary structure, monomer. Part of the FGAM synthase complex composed of 1 PurL, 1 PurQ and 2 PurS subunits.

Its subcellular location is the cytoplasm. It carries out the reaction N(2)-formyl-N(1)-(5-phospho-beta-D-ribosyl)glycinamide + L-glutamine + ATP + H2O = 2-formamido-N(1)-(5-O-phospho-beta-D-ribosyl)acetamidine + L-glutamate + ADP + phosphate + H(+). It participates in purine metabolism; IMP biosynthesis via de novo pathway; 5-amino-1-(5-phospho-D-ribosyl)imidazole from N(2)-formyl-N(1)-(5-phospho-D-ribosyl)glycinamide: step 1/2. In terms of biological role, part of the phosphoribosylformylglycinamidine synthase complex involved in the purines biosynthetic pathway. Catalyzes the ATP-dependent conversion of formylglycinamide ribonucleotide (FGAR) and glutamine to yield formylglycinamidine ribonucleotide (FGAM) and glutamate. The FGAM synthase complex is composed of three subunits. PurQ produces an ammonia molecule by converting glutamine to glutamate. PurL transfers the ammonia molecule to FGAR to form FGAM in an ATP-dependent manner. PurS interacts with PurQ and PurL and is thought to assist in the transfer of the ammonia molecule from PurQ to PurL. The chain is Phosphoribosylformylglycinamidine synthase subunit PurL from Corynebacterium jeikeium (strain K411).